The chain runs to 78 residues: RNA-binding protein Hfq (78 aa).

Residues 10 to 69 form the Sm domain; the sequence is DPFLNALRREHVPVSIYLVNGIKLQGQVESFDQYVVLLKNTVTQMVYKHAISTVVPARPV.

Belongs to the Hfq family. In terms of assembly, homohexamer.

RNA chaperone that binds small regulatory RNA (sRNAs) and mRNAs to facilitate mRNA translational regulation in response to envelope stress, environmental stress and changes in metabolite concentrations. Also binds with high specificity to tRNAs. This Dechloromonas aromatica (strain RCB) protein is RNA-binding protein Hfq.